The primary structure comprises 410 residues: Replication-associated protein G2P (410 aa).

Residue M1 is modified to N-formylmethionine.

This sequence belongs to the inovirus G2P protein family.

The catalysed reaction is ATP + (deoxyribonucleotide)n-3'-hydroxyl + 5'-phospho-(deoxyribonucleotide)m = (deoxyribonucleotide)n+m + AMP + diphosphate.. Its function is as follows. Isoform G2P plays an essential role in viral DNA replication. Binds the origin of replication and cleaves the dsDNA replicative form I (RFI) and becomes covalently bound to it via phosphotyrosine bond, generating the dsDNA replicative form II (RFII). In turn, viral DNA replication initiates at the 3'-OH of the cleavage site. After one round of rolling circle synthesis, protein G2P is linked to the newly synthesized ssDNA and joins the ends of the displaced strand to generate a circular single-stranded molecule ready to be packed into a virion. Functionally, isoform G10P protein binds to double-stranded DNA and prevents hydrolysis by nucleases. Additionally, G10P is an inhibitor of DNA replication and may have a role in the transition from semiconservative replicative form DNA replication to single-stranded DNA synthesis in the life cycle. The sequence is that of Replication-associated protein G2P (II) from Enterobacteria phage f1 (Bacteriophage f1).